A 153-amino-acid polypeptide reads, in one-letter code: Small ribosomal subunit protein uS13 (153 aa).

The protein belongs to the universal ribosomal protein uS13 family. In terms of assembly, part of the 30S ribosomal subunit. Forms a loose heterodimer with protein S19. Forms two bridges to the 50S subunit in the 70S ribosome.

Located at the top of the head of the 30S subunit, it contacts several helices of the 16S rRNA. In the 70S ribosome it contacts the 23S rRNA (bridge B1a) and protein L5 of the 50S subunit (bridge B1b), connecting the 2 subunits; these bridges are implicated in subunit movement. In Pyrobaculum islandicum (strain DSM 4184 / JCM 9189 / GEO3), this protein is Small ribosomal subunit protein uS13.